We begin with the raw amino-acid sequence, 381 residues long: Chaperone protein DnaJ (381 aa).

Residues 4 to 69 enclose the J domain; it reads DYYEILGVTR…QKRAAYDRFG (66 aa). A CR-type zinc finger spans residues 135–213; that stretch reads GKTAQINIPS…CQGTRRVEKN (79 aa). Residues C148, C151, C165, C168, C187, C190, C201, and C204 each coordinate Zn(2+). 4 CXXCXGXG motif repeats span residues 148 to 155, 165 to 172, 187 to 194, and 201 to 208; these read CDACEGSG, CGTCHGAG, CPVCHGRG, and CPKCQGTR.

This sequence belongs to the DnaJ family. Homodimer. It depends on Zn(2+) as a cofactor.

Its subcellular location is the cytoplasm. In terms of biological role, participates actively in the response to hyperosmotic and heat shock by preventing the aggregation of stress-denatured proteins and by disaggregating proteins, also in an autonomous, DnaK-independent fashion. Unfolded proteins bind initially to DnaJ; upon interaction with the DnaJ-bound protein, DnaK hydrolyzes its bound ATP, resulting in the formation of a stable complex. GrpE releases ADP from DnaK; ATP binding to DnaK triggers the release of the substrate protein, thus completing the reaction cycle. Several rounds of ATP-dependent interactions between DnaJ, DnaK and GrpE are required for fully efficient folding. Also involved, together with DnaK and GrpE, in the DNA replication of plasmids through activation of initiation proteins. The chain is Chaperone protein DnaJ from Bartonella henselae (strain ATCC 49882 / DSM 28221 / CCUG 30454 / Houston 1) (Rochalimaea henselae).